The sequence spans 317 residues: MAELACFCYPHLENDSYKFIPFNNLAIKCMLTAKVDKKDQDKFYNSIIYGIAPPPQFKKRYNTNDNSRGMNYETPMLIKVAILICEALNSIKVTQSDVANVLSRVVSVRHLENLVLRKENHQDVLFHSKELLLKSVLIAIGQSKEIETTATAEGGEIVFQNVAFTMWKLTYLDHKLMPILDQNFIEYKITMNEDKPISDVHVKELIAELRWQYNRFAVITHGKGHYRVVKYSSVANHADRVFATYKNNAKSGNVIDFNLLDQRIIWQNWYAFTSSMKQGFTLDVCKKLLFQKMKQERNPFKGLSTDRKMDEVSRIGI.

ATP-binding positions include 107–109 (SVR), Lys188, and 221–223 (HGK). The segment at 205–241 (LIAELRWQYNRFAVITHGKGHYRVVKYSSVANHADRV) is RNA-binding. Residue His225 is the For NTPase and RTPase activities of the active site. Residue Arg227 coordinates ATP.

This sequence belongs to the rotavirus NSP2 family. Homooctamer. Interacts with VP1; this interaction is weak. Interacts with NSP5; this interaction leads to up-regulation of NSP5 phosphorylation and formation of viral factories. Interacts with host DCP1A, DCP1B, DDX6, EDC4 and EIF2S1/eIF2-alpha; these interactions are probably part of the sequestration of some host SGs and PBs proteins in viral factories. It depends on Mg(2+) as a cofactor.

The protein resides in the host cytoplasm. Its function is as follows. Participates in replication and packaging of the viral genome. Plays a crucial role, together with NSP5, in the formation of virus factories (viroplasms), which are large inclusions in the host cytoplasm where replication intermediates are assembled and viral RNA replication takes place. Displays ssRNA binding, NTPase, RNA triphosphatase (RTPase) and ATP-independent helix-unwinding activities. The unwinding activity may prepare and organize plus-strand RNAs for packaging and replication by removing interfering secondary structures. The RTPase activity plays a role in the removal of the gamma-phosphate from the rotavirus RNA minus strands of dsRNA genome segments. Participates in the selective exclusion of host proteins from stress granules (SG) and P bodies (PB). Also participates in the sequestration of these remodeled organelles in viral factories. This chain is Non-structural protein 2, found in Rotavirus A (strain RVA/Human/Japan/KU/1995/G1P1A[8]) (RV-A).